A 532-amino-acid chain; its full sequence is Cytochrome P450 monooxygenase criE (532 aa).

The helical transmembrane segment at 18-38 threads the bilayer; that stretch reads VSPAALSWAVVAVYIGTFFWL. Cysteine 441 provides a ligand contact to heme.

It belongs to the cytochrome P450 family. Heme is required as a cofactor.

The protein localises to the membrane. The enzyme catalyses preechinulin + reduced [NADPH--hemoprotein reductase] + O2 = neoechinulin A + oxidized [NADPH--hemoprotein reductase] + 2 H2O + H(+). It participates in secondary metabolite biosynthesis. It functions in the pathway alkaloid biosynthesis. Functionally, cytochrome P450 monooxygenase; part of the gene cluster that mediates the biosynthesis of echinulin family alkaloid. The pathway begins with the biosynthesis of the cyclic dipeptide cyclo-L-Trp-L-Ala (cyclo-TA) by the NRPS criC via condensation of L-alanine and L-tryptophan. The prenyltransferase criA then catalyzes the first prenylation step, a reverse prenylation reaction at C2, to yield preechinulin. Preechinulin is the substrate of the cytochrome P450 monooxygenase criE that catalyzes the formation of the double bond between C10 and C11 to produce neoechulin A. The unique prenyltransferase criF functions as a competitive enzyme with criE for preechinulin metabolization and uses preechinulin for effective regiospecific prenylations. Preechinulin is prenylated by criF at C5 or C7. C7-prenylation leads to accumulation of tardioxopiperazine B without further modification by criF. In contrast, the C5-prenylated tardioxopiperazine A can be prenylated again by criF, predominantly at C7 to form echinulin or less frequently at C4 to give variecolorin L. CriF also accepts neoechilunin A to produce varlecolorin G (prenylation at C5) or isoechinulin A (prenylation at C7). CriF further converts isoechinulin A into dehydroechinulin. Moreover, a yet unidentified enzyme can also convert neoechilunin A into neoechilunin B by introducing a double bond between positions C14 and C17 and thus provides a further substrate to criF for C5 and C7 prenylation. The polypeptide is Cytochrome P450 monooxygenase criE (Aspergillus cristatus (Chinese Fuzhuan brick tea-fermentation fungus)).